We begin with the raw amino-acid sequence, 146 residues long: Hemoglobin cathodic subunit beta (146 aa).

A Globin domain is found at 2–146 (QWSSSERSTI…VVSALSRQYF (145 aa)). Residues histidine 63 and histidine 92 each contribute to the heme b site.

The protein belongs to the globin family. In terms of assembly, heterotetramer of two alpha chains and two beta chains. In terms of tissue distribution, red blood cells.

Involved in oxygen transport from the gills to the various peripheral tissues. The chain is Hemoglobin cathodic subunit beta from Conger conger (Conger eel).